The following is a 174-amino-acid chain: Peptide deformylase (174 aa).

Fe cation contacts are provided by C96 and H138. The active site involves E139. H142 lines the Fe cation pocket.

The protein belongs to the polypeptide deformylase family. Requires Fe(2+) as cofactor.

It catalyses the reaction N-terminal N-formyl-L-methionyl-[peptide] + H2O = N-terminal L-methionyl-[peptide] + formate. Removes the formyl group from the N-terminal Met of newly synthesized proteins. Requires at least a dipeptide for an efficient rate of reaction. N-terminal L-methionine is a prerequisite for activity but the enzyme has broad specificity at other positions. The chain is Peptide deformylase from Helicobacter pylori (strain G27).